Consider the following 100-residue polypeptide: Small ribosomal subunit protein uS14c (100 aa).

The protein belongs to the universal ribosomal protein uS14 family. As to quaternary structure, part of the 30S ribosomal subunit.

The protein resides in the plastid. Its subcellular location is the chloroplast. Binds 16S rRNA, required for the assembly of 30S particles. This chain is Small ribosomal subunit protein uS14c, found in Cicer arietinum (Chickpea).